The chain runs to 215 residues: FBD domain-containing protein At3g58975 (215 aa).

Residues 122 to 199 (RSLTSCPVKK…KLSSCNVQLL (78 aa)) enclose the FBD domain.

The chain is FBD domain-containing protein At3g58975 from Arabidopsis thaliana (Mouse-ear cress).